The sequence spans 901 residues: HTH-type transcriptional regulator MalT (901 aa).

39–46 (SPAGYGKT) contacts ATP. Residues 829 to 894 (ELIRTSPLTQ…DAVQHAQQLL (66 aa)) enclose the HTH luxR-type domain. Positions 853 to 872 (NEQIAGELEVAATTIKTHIR) form a DNA-binding region, H-T-H motif.

It belongs to the MalT family. As to quaternary structure, monomer in solution. Oligomerizes to an active state in the presence of the positive effectors ATP and maltotriose.

Its activity is regulated as follows. Activated by ATP and maltotriose, which are both required for DNA binding. Functionally, positively regulates the transcription of the maltose regulon whose gene products are responsible for uptake and catabolism of malto-oligosaccharides. Specifically binds to the promoter region of its target genes, recognizing a short DNA motif called the MalT box. In Escherichia fergusonii (strain ATCC 35469 / DSM 13698 / CCUG 18766 / IAM 14443 / JCM 21226 / LMG 7866 / NBRC 102419 / NCTC 12128 / CDC 0568-73), this protein is HTH-type transcriptional regulator MalT.